A 548-amino-acid polypeptide reads, in one-letter code: Synaptic vesicle 2-related protein (548 aa).

Residues 1–87 (MEEDLFQLRQ…GFGRFQWKLS (87 aa)) lie on the Cytoplasmic side of the membrane. 2 positions are modified to phosphoserine: serine 25 and serine 31. A helical transmembrane segment spans residues 88 to 108 (VLTGLAWMADAMEMMILSILA). Topologically, residues 109–122 (PQLHCEWRLPSWQV) are vesicular. A helical transmembrane segment spans residues 123-143 (ALLTSVVFIGMMSSSTLWGNI). Topologically, residues 144–156 (SDQYGRKTGLKIS) are cytoplasmic. A helical transmembrane segment spans residues 157–177 (VFWTLYYGILSAFAPVYSWIL). Residues 178–180 (VLR) are Vesicular-facing. Residues 181 to 201 (GLVGFGIGGVPQSVTLYAEFL) traverse the membrane as a helical segment. The Cytoplasmic segment spans residues 202 to 209 (PMKARAKC). The helical transmembrane segment at 210 to 230 (ILLIEVFWAIGTVFEVLLAVF) threads the bilayer. Residues 231-238 (VMPSLGWR) lie on the Vesicular side of the membrane. The helical transmembrane segment at 239-259 (WLLLLSAAPLLVFAVLCFWLP) threads the bilayer. Topologically, residues 260-316 (ESARYDVLSGNQEKAIATLKRIATENGAPMPLGKLIISRQEDRGKMRDLFTPHFRWT) are cytoplasmic. The chain crosses the membrane as a helical span at residues 317–337 (TLLLWFIWFSNAFSYYGLVLL). Over 338–373 (TTELFQAGDVCSISSRKKAVEAKCSLACEYLSKEDY) the chain is Vesicular. A helical transmembrane segment spans residues 374–394 (MDLLWTTLSEFPGVLVTLWVI). Residues 395–401 (DRLGRKK) lie on the Cytoplasmic side of the membrane. Residues 402 to 422 (TMALCFVIFSLCSLLLFICIG) traverse the membrane as a helical segment. At 423-424 (RN) the chain is on the vesicular side. Residues 425–445 (VLTLLLFIARAFISGGFQAAY) traverse the membrane as a helical segment. At 446–457 (VYTPEVYPTATR) the chain is on the cytoplasmic side. Residues 458 to 478 (ALGLGTCSGMARVGALITPFI) form a helical membrane-spanning segment. Over 479–489 (AQVMLESSVYL) the chain is Vesicular. The helical transmembrane segment at 490-510 (TLAVYSGCCLLAALASCFLPI) threads the bilayer. Residues 511-548 (ETKGRALQESSHREWGQEMVGRGTNSTGVPRSNSGSQE) are Cytoplasmic-facing. The segment at 523 to 548 (REWGQEMVGRGTNSTGVPRSNSGSQE) is disordered. A compositionally biased stretch (polar residues) spans 533–548 (GTNSTGVPRSNSGSQE). Serine 542 carries the post-translational modification Phosphoserine.

This sequence belongs to the major facilitator superfamily. As to expression, detected in brain (at protein level). Detected in brain, in synaptic layers of the cerebellum, hippocampus and cerebral cortex.

It localises to the cytoplasmic vesicle. The protein localises to the secretory vesicle. The protein resides in the synaptic vesicle membrane. In Rattus norvegicus (Rat), this protein is Synaptic vesicle 2-related protein (Svop).